We begin with the raw amino-acid sequence, 251 residues long: 3-deoxy-manno-octulosonate cytidylyltransferase (251 aa).

The protein belongs to the KdsB family.

The protein localises to the cytoplasm. The catalysed reaction is 3-deoxy-alpha-D-manno-oct-2-ulosonate + CTP = CMP-3-deoxy-beta-D-manno-octulosonate + diphosphate. It functions in the pathway nucleotide-sugar biosynthesis; CMP-3-deoxy-D-manno-octulosonate biosynthesis; CMP-3-deoxy-D-manno-octulosonate from 3-deoxy-D-manno-octulosonate and CTP: step 1/1. Its pathway is bacterial outer membrane biogenesis; lipopolysaccharide biosynthesis. Activates KDO (a required 8-carbon sugar) for incorporation into bacterial lipopolysaccharide in Gram-negative bacteria. The protein is 3-deoxy-manno-octulosonate cytidylyltransferase of Sodalis glossinidius (strain morsitans).